The sequence spans 148 residues: Troponin C (148 aa).

4 consecutive EF-hand domains span residues 8–43, 44–79, 81–116, and 117–148; these read KQFN…LALH, VSDD…KVQE, EDER…LGDD, and LNDD…LMLG. Residues aspartate 130, aspartate 132, serine 134, threonine 136, and glutamate 141 each coordinate Ca(2+).

This sequence belongs to the troponin C family.

Troponin is the central regulatory protein of striated muscle contraction. Tn consists of three components: Tn-I which is the inhibitor of actomyosin ATPase, Tn-T which contains the binding site for tropomyosin and Tn-C. The binding of calcium to Tn-C abolishes the inhibitory action of Tn on actin filaments. This is Troponin C from Todarodes pacificus (Japanese flying squid).